Consider the following 360-residue polypeptide: Alpha-2-macroglobulin receptor-associated protein (360 aa).

An N-terminal signal peptide occupies residues 1–33 (MAPLRDRVSTLPRLQLLVLLLLPLLLVPQPIAG). Residues Ser53 and Ser138 each carry the phosphoserine modification. Positions 222 to 302 (SKHSELKDRL…KHNHYQKQLE (81 aa)) form a coiled coil. The tract at residues 240–356 (RLRKVSHQGY…DLSSRVSRAR (117 aa)) is LDL receptor binding. Residue Asn271 is glycosylated (N-linked (GlcNAc...) asparagine). Positions 357 to 360 (HNEL) match the Prevents secretion from ER motif.

The protein belongs to the alpha-2-MRAP family. Interacts with the LRP1/alpha-2-macroglobulin receptor heavy and light chains; the interaction is transient and coincides with a reduction of ligand binding by the receptor. Interacts with LRP2/glycoprotein 330. Interacts with LRP1B; binding is followed by internalization and degradation. Interacts with LDLR. Interacts with SORL1. Interacts with LRP1; this interaction is followed by rapid internalization. In terms of processing, N-glycosylated.

It localises to the rough endoplasmic reticulum lumen. The protein resides in the endoplasmic reticulum-Golgi intermediate compartment lumen. It is found in the golgi apparatus. Its subcellular location is the cis-Golgi network. The protein localises to the golgi apparatus lumen. It localises to the endosome lumen. The protein resides in the cell surface. Molecular chaperone for LDL receptor-related proteins that may regulate their ligand binding activity along the secretory pathway. This chain is Alpha-2-macroglobulin receptor-associated protein (Lrpap1), found in Rattus norvegicus (Rat).